The sequence spans 539 residues: Chaperonin GroEL (539 aa).

Residues 29–32, 86–90, glycine 413, 476–478, and aspartate 492 each bind ATP; these read TIGP, DGTTT, and NAA.

It belongs to the chaperonin (HSP60) family. As to quaternary structure, forms a cylinder of 14 subunits composed of two heptameric rings stacked back-to-back. Interacts with the co-chaperonin GroES.

The protein resides in the cytoplasm. It catalyses the reaction ATP + H2O + a folded polypeptide = ADP + phosphate + an unfolded polypeptide.. In terms of biological role, together with its co-chaperonin GroES, plays an essential role in assisting protein folding. The GroEL-GroES system forms a nano-cage that allows encapsulation of the non-native substrate proteins and provides a physical environment optimized to promote and accelerate protein folding. The sequence is that of Chaperonin GroEL from Staphylococcus epidermidis (strain ATCC 12228 / FDA PCI 1200).